Reading from the N-terminus, the 147-residue chain is Hemoglobin subunit epsilon (147 aa).

One can recognise a Globin domain in the interval 3 to 147 (HFTAEEKAAI…VAIALGHKYH (145 aa)). Phosphoserine is present on residues S14 and S51. Positions 64 and 93 each coordinate heme b.

The protein belongs to the globin family. As to quaternary structure, heterotetramer of two alpha chains and two epsilon chains in early embryonic hemoglobin Gower-2; two zeta chains and two epsilon chains in early embryonic hemoglobin Gower-1. Red blood cells.

Functionally, the epsilon chain is a beta-type chain of early mammalian embryonic hemoglobin. The polypeptide is Hemoglobin subunit epsilon (HBE1) (Lagothrix lagotricha (Brown woolly monkey)).